Consider the following 444-residue polypeptide: Tol-Pal system protein TolB (444 aa).

Residues 1–31 (MSFDLNRRQLMISAATAAGALALGPARDAFG) form the signal peptide.

Belongs to the TolB family. In terms of assembly, the Tol-Pal system is composed of five core proteins: the inner membrane proteins TolA, TolQ and TolR, the periplasmic protein TolB and the outer membrane protein Pal. They form a network linking the inner and outer membranes and the peptidoglycan layer.

Its subcellular location is the periplasm. Its function is as follows. Part of the Tol-Pal system, which plays a role in outer membrane invagination during cell division and is important for maintaining outer membrane integrity. The chain is Tol-Pal system protein TolB from Rhodopseudomonas palustris (strain ATCC BAA-98 / CGA009).